The chain runs to 189 residues: Cell division protein SepF (189 aa).

Residues 18-64 are disordered; sequence EVTDHEDVAKERPVKVQKTEQTPSQQQRKPERPQETVPPRRQHIKSD. The segment covering 22–35 has biased composition (basic and acidic residues); that stretch reads HEDVAKERPVKVQK.

The protein belongs to the SepF family. Homodimer. Interacts with FtsZ.

The protein localises to the cytoplasm. Its function is as follows. Cell division protein that is part of the divisome complex and is recruited early to the Z-ring. Probably stimulates Z-ring formation, perhaps through the cross-linking of FtsZ protofilaments. Its function overlaps with FtsA. The sequence is that of Cell division protein SepF from Streptococcus thermophilus (strain ATCC BAA-250 / LMG 18311).